The primary structure comprises 504 residues: Maturase K (504 aa).

This sequence belongs to the intron maturase 2 family. MatK subfamily.

It localises to the plastid. It is found in the chloroplast. Its function is as follows. Usually encoded in the trnK tRNA gene intron. Probably assists in splicing its own and other chloroplast group II introns. This Nepenthes alata (Winged pitcher plant) protein is Maturase K.